Consider the following 418-residue polypeptide: AP-3 complex subunit mu-1 (418 aa).

The MHD domain occupies asparagine 176–arginine 417.

It belongs to the adaptor complexes medium subunit family. In terms of assembly, adaptor protein complex 3 (AP-3) is a heterotetramer composed of two large adaptins (delta-type subunit AP3D1 and beta-type subunit AP3B1 or AP3B2), a medium adaptin (mu-type subunit AP3M1 or AP3M2) and a small adaptin (sigma-type subunit APS1 or AP3S2). Interacts with AGAP1. AP-3 associates with the BLOC-1 complex.

It is found in the golgi apparatus. Its subcellular location is the cytoplasmic vesicle membrane. Part of the AP-3 complex, an adaptor-related complex which is not clathrin-associated. The complex is associated with the Golgi region as well as more peripheral structures. It facilitates the budding of vesicles from the Golgi membrane and may be directly involved in trafficking to lysosomes. In concert with the BLOC-1 complex, AP-3 is required to target cargos into vesicles assembled at cell bodies for delivery into neurites and nerve terminals. This Mus musculus (Mouse) protein is AP-3 complex subunit mu-1 (Ap3m1).